A 448-amino-acid polypeptide reads, in one-letter code: Exodeoxyribonuclease 7 large subunit (448 aa).

It belongs to the XseA family. As to quaternary structure, heterooligomer composed of large and small subunits.

It localises to the cytoplasm. It catalyses the reaction Exonucleolytic cleavage in either 5'- to 3'- or 3'- to 5'-direction to yield nucleoside 5'-phosphates.. In terms of biological role, bidirectionally degrades single-stranded DNA into large acid-insoluble oligonucleotides, which are then degraded further into small acid-soluble oligonucleotides. In Alcanivorax borkumensis (strain ATCC 700651 / DSM 11573 / NCIMB 13689 / SK2), this protein is Exodeoxyribonuclease 7 large subunit.